Reading from the N-terminus, the 506-residue chain is MKEYPVYLEQARSRQQDFLYPLLFREYIYGLAYSHNWNRSIFLENGGYDNKYSLLIVKRLITRMYQQNHLIISANDSTKNPFGGYNKNLDSQIISEGFAIVVEIPFLLQLSSSLEEGEILQSYQNLRSIHSIFPFLEDKLTYLNYVADIRIPYPIHLEILVQILRYWVKDVPFFHLLRLFLYHFCNRNSFITTKKSISTFSKSNPRLFLFLYNFYVCEYEYFFVFLRTQSSHLRFQYFSVFFERIFFDAKREHLVKVFSKDFSYTLTLFKDPNIHYVRYQGKCILTSKNAPFLMNKWKHYFIHLWQCFFDIWSQPRMININPLSEHSFQLLGYFLNVRLNRSVVRSQMLQNTFLIEIVIQKLDIIVPILPLIRSLANAKFCNIVGEPISKPVWADSSDFDIIDRFLRICRNLSHYYNGSSKKKSLYRIKYILRLSCIKTLACKHKSTVRAFLKRSGSEELLQEFFTEEEEILSLIFPRDSSTLQRLHRNRIWYLDIIFSNDLVHDE.

This sequence belongs to the intron maturase 2 family. MatK subfamily.

The protein localises to the plastid. It localises to the chloroplast. Functionally, usually encoded in the trnK tRNA gene intron. Probably assists in splicing its own and other chloroplast group II introns. In Lathyrus aphaca (Yellow vetchling), this protein is Maturase K.